Reading from the N-terminus, the 185-residue chain is Elongation factor P (185 aa).

Belongs to the elongation factor P family.

It localises to the cytoplasm. Its pathway is protein biosynthesis; polypeptide chain elongation. In terms of biological role, involved in peptide bond synthesis. Stimulates efficient translation and peptide-bond synthesis on native or reconstituted 70S ribosomes in vitro. Probably functions indirectly by altering the affinity of the ribosome for aminoacyl-tRNA, thus increasing their reactivity as acceptors for peptidyl transferase. The sequence is that of Elongation factor P from Streptococcus pyogenes serotype M4 (strain MGAS10750).